The sequence spans 969 residues: Chromosome transmission fidelity protein 18 homolog (969 aa).

The segment at 30–97 (EGTRDQAPPG…APSSPMVKRP (68 aa)) is disordered. Residue threonine 51 is modified to Phosphothreonine. Serine 221 is modified (phosphoserine). Disordered stretches follow at residues 250–269 (SEGEEAVLEGPPAEEPAPGQ) and 318–340 (RKPRPGVETTRVGKEATAPGKWK). Low complexity predominate over residues 257 to 268 (LEGPPAEEPAPG). Position 369 to 376 (369 to 376 (GPPGLGKT)) interacts with ATP. The tract at residues 856–889 (ARSGPQVDQGSSGPASLWTDSGEKGTRQPAPRNH) is disordered. Positions 876 to 889 (SGEKGTRQPAPRNH) are enriched in basic and acidic residues.

The protein belongs to the activator 1 small subunits family. CTF18 subfamily. As to quaternary structure, component of the CTF18-RFC complex, which consists of CTF18, CTF8, DCC1, RFC2, RFC3, RFC4 and RFC5. During assembly of the CTF18-RFC complex, CTF18 may first assemble into a subcomplex with RFC2, RFC3, RFC4 and RFC5. CTF18 then interacts directly with CTF8, which in turn interacts with DCC1. The CTF18-RFC complex associates with PCNA and with DNA polymerase POLH. The CTF18-RFC complex does not interact with the Rad9/Rad1/Hus1 complex. CTF18 interacts with SMC1A and RAD21. Interacts with DDX11.

It is found in the nucleus. Its function is as follows. Chromosome cohesion factor involved in sister chromatid cohesion and fidelity of chromosome transmission. Component of one of the cell nuclear antigen loader complexes, CTF18-replication factor C (CTF18-RFC), which consists of CTF18, CTF8, DCC1, RFC2, RFC3, RFC4 and RFC5. The CTF18-RFC complex binds to single-stranded and primed DNAs and has weak ATPase activity that is stimulated by the presence of primed DNA, replication protein A (RPA) and by proliferating cell nuclear antigen (PCNA). The CTF18-RFC complex catalyzes the ATP-dependent loading of PCNA onto primed and gapped DNA. Interacts with and stimulates DNA polymerase POLH. During DNA repair synthesis, involved in loading DNA polymerase POLE at the sites of local damage. The chain is Chromosome transmission fidelity protein 18 homolog (Chtf18) from Mus musculus (Mouse).